The sequence spans 271 residues: Probable ribosomal RNA small subunit methyltransferase A (271 aa).

Residues His-19, Leu-21, Gly-46, Glu-67, Asp-92, and Asn-107 each coordinate S-adenosyl-L-methionine.

This sequence belongs to the class I-like SAM-binding methyltransferase superfamily. rRNA adenine N(6)-methyltransferase family. RsmA subfamily.

The protein localises to the cytoplasm. Its function is as follows. Specifically dimethylates two adjacent adenosines in the loop of a conserved hairpin near the 3'-end of 16S rRNA in the 30S particle. May play a critical role in biogenesis of 30S subunits. This is Probable ribosomal RNA small subunit methyltransferase A from Methanosarcina mazei (strain ATCC BAA-159 / DSM 3647 / Goe1 / Go1 / JCM 11833 / OCM 88) (Methanosarcina frisia).